Consider the following 412-residue polypeptide: uncharacterized protein (412 aa).

A signal peptide spans 1 to 21; sequence MIIPMLRILLIVLFVLNLVTS. Disordered regions lie at residues 85 to 134, 250 to 294, and 327 to 357; these read QPPA…STTT, STTE…TPGT, and VELG…HVRE. Low complexity predominate over residues 88-105; sequence ASLTSLPAAPPSAQVAPP. A compositionally biased stretch (polar residues) spans 124 to 134; sequence TPQASISSTTT. Low complexity-rich tracts occupy residues 250-259 and 266-293; these read STTENTTEQS and TTST…GTPG. A compositionally biased stretch (acidic residues) spans 330-347; the sequence is GEGDDDEENDDDSSEEEE. A compositionally biased stretch (basic and acidic residues) spans 348-357; sequence TKPPARHVRE. The ShKT domain occupies 371 to 408; it reads CDEEEDDKGKICKLWAAGGLCGTHKPTMFLFCRKTCLC.

This is an uncharacterized protein from Caenorhabditis elegans.